The chain runs to 107 residues: L-rhamnose mutarotase (107 aa).

Position 21 (Y21) interacts with substrate. Residue H25 is the Proton donor of the active site. Substrate contacts are provided by residues Y44 and 79–80; that span reads WW. The segment at 88–107 is disordered; it reads ETNPDNSPKTNSLKEVFHLD. Over residues 90-100 the composition is skewed to polar residues; that stretch reads NPDNSPKTNSL.

The protein belongs to the rhamnose mutarotase family. As to quaternary structure, homodimer.

It localises to the cytoplasm. It carries out the reaction alpha-L-rhamnose = beta-L-rhamnose. It participates in carbohydrate metabolism; L-rhamnose metabolism. Involved in the anomeric conversion of L-rhamnose. The chain is L-rhamnose mutarotase from Flavobacterium johnsoniae (strain ATCC 17061 / DSM 2064 / JCM 8514 / BCRC 14874 / CCUG 350202 / NBRC 14942 / NCIMB 11054 / UW101) (Cytophaga johnsonae).